A 507-amino-acid polypeptide reads, in one-letter code: Arylsulfatase A (507 aa).

Positions 1–18 (MEALWTLTLALAAGLAAA) are cleaved as a signal peptide. Asp29, Asp30, and Cys69 together coordinate Ca(2+). The active-site Nucleophile is Cys69. The residue at position 69 (Cys69) is a 3-oxoalanine (Cys). Residue Lys123 coordinates substrate. His125 is an active-site residue. Ser150 serves as a coordination point for substrate. 2 disulfide bridges follow: Cys156–Cys172 and Cys161–Cys168. A glycan (N-linked (GlcNAc...) asparagine) is linked at Asn158. Residue Asn184 is glycosylated (N-linked (GlcNAc...) asparagine). His229 serves as a coordination point for substrate. Residues Asp281 and Asn282 each contribute to the Ca(2+) site. 4 disulfide bridges follow: Cys300–Cys414, Cys488–Cys500, Cys489–Cys502, and Cys493–Cys499. Substrate is bound at residue Lys302. Asn350 carries an N-linked (GlcNAc...) asparagine glycan.

The protein belongs to the sulfatase family. Homodimer at neutral pH and homooctamer at acidic pH. Exists both as a single chain of 58 kDa (component A) or as a chain of 50 kDa (component B) linked by disulfide bond(s) to a 7 kDa chain (component C). Interacts with SUMF1. Ca(2+) serves as cofactor. In terms of processing, the conversion to 3-oxoalanine (also known as C-formylglycine, FGly), of a serine or cysteine residue in prokaryotes and of a cysteine residue in eukaryotes, is critical for catalytic activity. This post-translational modification is severely defective in multiple sulfatase deficiency (MSD).

The protein resides in the endoplasmic reticulum. Its subcellular location is the lysosome. It carries out the reaction an N-acyl-1-beta-D-(3-O-sulfo)-galactosyl-sphing-4-enine + H2O = a beta-D-galactosyl-(1&lt;-&gt;1')-N-acylsphing-4-enine + sulfate + H(+). In terms of biological role, hydrolyzes cerebroside sulfate. In Bos taurus (Bovine), this protein is Arylsulfatase A (ARSA).